We begin with the raw amino-acid sequence, 613 residues long: Dihydroxy-acid dehydratase (613 aa).

Aspartate 81 lines the Mg(2+) pocket. Cysteine 122 is a [2Fe-2S] cluster binding site. Residues aspartate 123 and lysine 124 each contribute to the Mg(2+) site. Position 124 is an N6-carboxylysine (lysine 124). [2Fe-2S] cluster is bound at residue cysteine 193. Glutamate 489 lines the Mg(2+) pocket. Residue serine 515 is the Proton acceptor of the active site.

It belongs to the IlvD/Edd family. Homodimer. It depends on [2Fe-2S] cluster as a cofactor. Requires Mg(2+) as cofactor.

The catalysed reaction is (2R)-2,3-dihydroxy-3-methylbutanoate = 3-methyl-2-oxobutanoate + H2O. The enzyme catalyses (2R,3R)-2,3-dihydroxy-3-methylpentanoate = (S)-3-methyl-2-oxopentanoate + H2O. The protein operates within amino-acid biosynthesis; L-isoleucine biosynthesis; L-isoleucine from 2-oxobutanoate: step 3/4. Its pathway is amino-acid biosynthesis; L-valine biosynthesis; L-valine from pyruvate: step 3/4. Functionally, functions in the biosynthesis of branched-chain amino acids. Catalyzes the dehydration of (2R,3R)-2,3-dihydroxy-3-methylpentanoate (2,3-dihydroxy-3-methylvalerate) into 2-oxo-3-methylpentanoate (2-oxo-3-methylvalerate) and of (2R)-2,3-dihydroxy-3-methylbutanoate (2,3-dihydroxyisovalerate) into 2-oxo-3-methylbutanoate (2-oxoisovalerate), the penultimate precursor to L-isoleucine and L-valine, respectively. The polypeptide is Dihydroxy-acid dehydratase (Pseudomonas putida (strain ATCC 700007 / DSM 6899 / JCM 31910 / BCRC 17059 / LMG 24140 / F1)).